Here is a 353-residue protein sequence, read N- to C-terminus: Green-sensitive opsin-2 (353 aa).

The Extracellular segment spans residues 1-47 (MAAHEPVFAARRHNEDTTRESAFVYTNANNTRDPFEGPNYHIAPRWV). A glycan (N-linked (GlcNAc...) asparagine) is linked at N29. The helical transmembrane segment at 48 to 72 (YNVSSLWMIFVVIASVFTNGLVIVA) threads the bilayer. Residues 73–84 (TAKFKKLRHPLN) are Cytoplasmic-facing. A helical membrane pass occupies residues 85-110 (WILVNLAIADLGETVLASTISVINQI). The Extracellular portion of the chain corresponds to 111-124 (FGYFILGHPMCVFE). A disulfide bridge links C121 with C198. Residues 125 to 144 (GWTVSVCGITALWSLTIISW) traverse the membrane as a helical segment. The Cytoplasmic segment spans residues 145–163 (ERWVVVCKPFGNVKFDGKW). A helical membrane pass occupies residues 164–187 (AAGGIIFSWVWAIIWCTPPIFGWS). Over 188–213 (RYWPHGLKTSCGPDVFSGSEDPGVAS) the chain is Extracellular. Residues 214–241 (YMITLMLTCCILPLSIIIICYIFVWSAI) traverse the membrane as a helical segment. Over 242–263 (HQVAQQQKDSESTQKAEKEVSR) the chain is Cytoplasmic. The helical transmembrane segment at 264-287 (MVVVMILAFIVCWGPYASFATFSA) threads the bilayer. Residues 288–295 (VNPGYAWH) are Extracellular-facing. Residues 296-320 (PLAAAMPAYFAKSATIYNPIIYVFM) traverse the membrane as a helical segment. N6-(retinylidene)lysine is present on K307. The Cytoplasmic segment spans residues 321-353 (NRQFRSCIMQLFGKKVEDASEVSGSTTEVSTAS).

The protein belongs to the G-protein coupled receptor 1 family. Opsin subfamily. As to expression, the color pigments are found in the cone photoreceptor cells.

The protein localises to the membrane. Its function is as follows. Visual pigments are the light-absorbing molecules that mediate vision. They consist of an apoprotein, opsin, covalently linked to cis-retinal. This Psalidodon fasciatus (Banded astyanax) protein is Green-sensitive opsin-2 (G101).